The chain runs to 54 residues: Ovomucoid (54 aa).

The region spanning 4–54 is the Kazal-like domain; sequence VDCSDYPKPVCSLEDMPLCGSDSKTYSNKCNFCNAVVDSNGTLTLSHFGKC. Cystine bridges form between Cys-6/Cys-36, Cys-14/Cys-33, and Cys-22/Cys-54. N-linked (GlcNAc...) asparagine glycosylation is present at Asn-43.

It is found in the secreted. This chain is Ovomucoid, found in Vultur gryphus (Andean condor).